The primary structure comprises 254 residues: Vitamin B12 import ATP-binding protein BtuD (254 aa).

Residues M1 to P239 enclose the ABC transporter domain. G29–S36 is an ATP binding site.

The protein belongs to the ABC transporter superfamily. Vitamin B12 importer (TC 3.A.1.13.1) family. The complex is composed of two ATP-binding proteins (BtuD), two transmembrane proteins (BtuC) and a solute-binding protein (BtuF).

Its subcellular location is the cell inner membrane. The enzyme catalyses an R-cob(III)alamin(out) + ATP + H2O = an R-cob(III)alamin(in) + ADP + phosphate + H(+). Part of the ABC transporter complex BtuCDF involved in vitamin B12 import. Responsible for energy coupling to the transport system. This is Vitamin B12 import ATP-binding protein BtuD from Vibrio vulnificus (strain YJ016).